Consider the following 231-residue polypeptide: Ribonuclease P protein component 3 (231 aa).

This sequence belongs to the eukaryotic/archaeal RNase P protein component 3 family. As to quaternary structure, consists of a catalytic RNA component and at least 4-5 protein subunits.

The protein localises to the cytoplasm. The enzyme catalyses Endonucleolytic cleavage of RNA, removing 5'-extranucleotides from tRNA precursor.. Functionally, part of ribonuclease P, a protein complex that generates mature tRNA molecules by cleaving their 5'-ends. The protein is Ribonuclease P protein component 3 of Methanococcus vannielii (strain ATCC 35089 / DSM 1224 / JCM 13029 / OCM 148 / SB).